The sequence spans 222 residues: Thiol:disulfide interchange protein DsbL (222 aa).

The N-terminal stretch at 1–27 (MSKLGISSLFKTILLTAALAVSFTASA) is a signal peptide. One can recognise a Thioredoxin domain in the interval 28-221 (FTEGTDYMVL…MADLIRELAS (194 aa)). Cysteine 56 and cysteine 59 are oxidised to a cystine.

Belongs to the thioredoxin family. DsbL subfamily. As to quaternary structure, interacts with DsbI.

It localises to the periplasm. Functionally, involved in disulfide-bond formation. Acts by transferring its disulfide bond to other proteins. Part of a redox system composed of DsbI and DsbL that mediates formation of an essential disulfide bond in AssT. This is Thiol:disulfide interchange protein DsbL from Escherichia coli O6:H1 (strain CFT073 / ATCC 700928 / UPEC).